The primary structure comprises 350 residues: Phosphoribosylformylglycinamidine cyclo-ligase (350 aa).

It belongs to the AIR synthase family.

It localises to the cytoplasm. The catalysed reaction is 2-formamido-N(1)-(5-O-phospho-beta-D-ribosyl)acetamidine + ATP = 5-amino-1-(5-phospho-beta-D-ribosyl)imidazole + ADP + phosphate + H(+). It functions in the pathway purine metabolism; IMP biosynthesis via de novo pathway; 5-amino-1-(5-phospho-D-ribosyl)imidazole from N(2)-formyl-N(1)-(5-phospho-D-ribosyl)glycinamide: step 2/2. This is Phosphoribosylformylglycinamidine cyclo-ligase from Syntrophotalea carbinolica (strain DSM 2380 / NBRC 103641 / GraBd1) (Pelobacter carbinolicus).